Reading from the N-terminus, the 789-residue chain is Phenylalanine--tRNA ligase beta subunit (789 aa).

One can recognise a tRNA-binding domain in the interval 38–151 (KKHLQSFVVV…NTYNVGESFF (114 aa)). The B5 domain occupies 398–474 (HNDILLNFSP…RLYGYDKILE (77 aa)). Positions 452, 458, 461, and 462 each coordinate Mg(2+). Positions 694–787 (LRYQSVKRDF…ISKGFNGILR (94 aa)) constitute an FDX-ACB domain.

This sequence belongs to the phenylalanyl-tRNA synthetase beta subunit family. Type 1 subfamily. As to quaternary structure, tetramer of two alpha and two beta subunits. Requires Mg(2+) as cofactor.

It is found in the cytoplasm. It carries out the reaction tRNA(Phe) + L-phenylalanine + ATP = L-phenylalanyl-tRNA(Phe) + AMP + diphosphate + H(+). This Ehrlichia ruminantium (strain Welgevonden) protein is Phenylalanine--tRNA ligase beta subunit.